Reading from the N-terminus, the 75-residue chain is Conotoxin Leo-O3 (75 aa).

The first 22 residues, 1-22, serve as a signal peptide directing secretion; that stretch reads MKLTCVVIVAVLFLTACQLATA. Residues 23–42 constitute a propeptide that is removed on maturation; the sequence is DISGGMRKHRALRSTTKLSR. 3 cysteine pairs are disulfide-bonded: cysteine 47–cysteine 60, cysteine 54–cysteine 63, and cysteine 59–cysteine 69. Residue cysteine 69 is modified to Cysteine amide. A propeptide spanning residues 70–75 is cleaved from the precursor; that stretch reads GSGLHV.

It belongs to the conotoxin O1 superfamily. Expressed by the venom duct.

Its subcellular location is the secreted. In Conus leopardus (Leopard cone), this protein is Conotoxin Leo-O3.